The following is a 987-amino-acid chain: Mediator of RNA polymerase II transcription subunit 24 (987 aa).

6 consecutive short sequence motifs (LXXLL motif) follow at residues 128–132, 344–348, 446–450, 555–559, 786–790, and 855–859; these read LHWLL, LTPLL, LDLLL, LVALL, LPGLL, and LMRLL. 2 positions are modified to phosphoserine: S860 and S871.

The protein belongs to the Mediator complex subunit 24 family. Component of the Mediator complex, which is composed of MED1, MED4, MED6, MED7, MED8, MED9, MED10, MED11, MED12, MED13, MED13L, MED14, MED15, MED16, MED17, MED18, MED19, MED20, MED21, MED22, MED23, MED24, MED25, MED26, MED27, MED29, MED30, MED31, CCNC, CDK8 and CDC2L6/CDK11. The MED12, MED13, CCNC and CDK8 subunits form a distinct module termed the CDK8 module. Mediator containing the CDK8 module is less active than Mediator lacking this module in supporting transcriptional activation. Individual preparations of the Mediator complex lacking one or more distinct subunits have been variously termed ARC, CRSP, DRIP, PC2, SMCC and TRAP. Interacts with AR.

It is found in the nucleus. Functionally, component of the Mediator complex, a coactivator involved in the regulated transcription of nearly all RNA polymerase II-dependent genes. Mediator functions as a bridge to convey information from gene-specific regulatory proteins to the basal RNA polymerase II transcription machinery. Mediator is recruited to promoters by direct interactions with regulatory proteins and serves as a scaffold for the assembly of a functional preinitiation complex with RNA polymerase II and the general transcription factors. This Rattus norvegicus (Rat) protein is Mediator of RNA polymerase II transcription subunit 24 (Med24).